A 299-amino-acid polypeptide reads, in one-letter code: 4-hydroxy-tetrahydrodipicolinate synthase (299 aa).

Pyruvate is bound at residue Thr45. Tyr133 functions as the Proton donor/acceptor in the catalytic mechanism. Lys161 serves as the catalytic Schiff-base intermediate with substrate. Residue Ile203 coordinates pyruvate.

Belongs to the DapA family. As to quaternary structure, homotetramer; dimer of dimers.

The protein resides in the cytoplasm. It carries out the reaction L-aspartate 4-semialdehyde + pyruvate = (2S,4S)-4-hydroxy-2,3,4,5-tetrahydrodipicolinate + H2O + H(+). It participates in amino-acid biosynthesis; L-lysine biosynthesis via DAP pathway; (S)-tetrahydrodipicolinate from L-aspartate: step 3/4. In terms of biological role, catalyzes the condensation of (S)-aspartate-beta-semialdehyde [(S)-ASA] and pyruvate to 4-hydroxy-tetrahydrodipicolinate (HTPA). In Blochmanniella pennsylvanica (strain BPEN), this protein is 4-hydroxy-tetrahydrodipicolinate synthase.